The chain runs to 728 residues: 1,4-alpha-glucan branching enzyme GlgB (728 aa).

The Nucleophile role is filled by aspartate 405. Catalysis depends on glutamate 458, which acts as the Proton donor.

It belongs to the glycosyl hydrolase 13 family. GlgB subfamily. Monomer.

The enzyme catalyses Transfers a segment of a (1-&gt;4)-alpha-D-glucan chain to a primary hydroxy group in a similar glucan chain.. Its pathway is glycan biosynthesis; glycogen biosynthesis. Functionally, catalyzes the formation of the alpha-1,6-glucosidic linkages in glycogen by scission of a 1,4-alpha-linked oligosaccharide from growing alpha-1,4-glucan chains and the subsequent attachment of the oligosaccharide to the alpha-1,6 position. The chain is 1,4-alpha-glucan branching enzyme GlgB from Salmonella paratyphi A (strain ATCC 9150 / SARB42).